A 314-amino-acid polypeptide reads, in one-letter code: Malate dehydrogenase (314 aa).

Residues 7 to 12 (GAGNVG) and D32 each bind NAD(+). R81 and R87 together coordinate substrate. NAD(+)-binding positions include N94 and 117 to 119 (VAN). Substrate-binding residues include N119 and R150. H174 functions as the Proton acceptor in the catalytic mechanism.

This sequence belongs to the LDH/MDH superfamily. MDH type 3 family.

The enzyme catalyses (S)-malate + NAD(+) = oxaloacetate + NADH + H(+). Catalyzes the reversible oxidation of malate to oxaloacetate. The polypeptide is Malate dehydrogenase (Salinibacter ruber (strain DSM 13855 / M31)).